Reading from the N-terminus, the 178-residue chain is Large ribosomal subunit protein uL6 (178 aa).

It belongs to the universal ribosomal protein uL6 family. Part of the 50S ribosomal subunit.

Functionally, this protein binds to the 23S rRNA, and is important in its secondary structure. It is located near the subunit interface in the base of the L7/L12 stalk, and near the tRNA binding site of the peptidyltransferase center. This Symbiobacterium thermophilum (strain DSM 24528 / JCM 14929 / IAM 14863 / T) protein is Large ribosomal subunit protein uL6.